A 12345-amino-acid chain; its full sequence is Muscle-specific protein 300 kDa (12345 aa).

2 disordered regions span residues methionine 1–threonine 68 and tryptophan 121–asparagine 152. Over methionine 1 to arginine 12295 the chain is Cytoplasmic. The segment covering alanine 19–glycine 28 has biased composition (gly residues). The segment covering glutamate 45–glutamine 60 has biased composition (basic and acidic residues). Residues phenylalanine 249–threonine 273 form an LRR 1 repeat. Disordered regions lie at residues glutamate 295–aspartate 325, threonine 387–isoleucine 488, and glycine 504–alanine 526. Low complexity predominate over residues serine 299–proline 321. 2 stretches are compositionally biased toward polar residues: residues threonine 387–glutamine 404 and threonine 414–proline 434. Over residues threonine 462 to serine 484 the composition is skewed to low complexity. Residues asparagine 511–aspartate 520 show a composition bias toward acidic residues. Calponin-homology (CH) domains lie at arginine 630–glutamine 737 and glutamine 777–proline 882. An LRR 2 repeat occupies leucine 823–serine 847. Residues serine 919–glutamine 952 form a TPR 1 repeat. LRR repeat units lie at residues cysteine 1089–glutamate 1112, histidine 1389–tryptophan 1411, and leucine 1616–arginine 1642. One copy of the TPR 2 repeat lies at leucine 1603–valine 1636. Residues threonine 1903–aspartate 1935 form an HAT 1 repeat. 2 LRR repeats span residues lysine 2087 to alanine 2109 and glutamine 2558 to alanine 2581. The Calponin-homology (CH) 3 domain maps to alanine 2109–alanine 2233. A TPR 3 repeat occupies alanine 2663–leucine 2696. The segment at alanine 2699–leucine 2724 is disordered. Basic and acidic residues predominate over residues proline 2704–leucine 2724. LRR repeat units lie at residues lysine 2728–proline 2751, cysteine 2935–leucine 2959, and serine 3030–cysteine 3053. The stretch at glutamate 2894 to leucine 2962 forms a coiled coil. Residues leucine 3110 to isoleucine 3207 form a Spectrin 1 repeat. The TPR 4 repeat unit spans residues lysine 3346–histidine 3379. 4 LRR repeats span residues lysine 3370–leucine 3393, leucine 3437–lysine 3462, leucine 3530–asparagine 3556, and asparagine 3611–lysine 3634. A Spectrin 2 repeat occupies lysine 3539 to alanine 3633. A TPR 5 repeat occupies lysine 3629–glutamate 3662. The stretch at lysine 3706–serine 3739 is one HAT 2 repeat. An LRR 15 repeat occupies leucine 3748–alanine 3771. The stretch at serine 4177 to lysine 4273 is one Spectrin 3 repeat. The stretch at glutamate 4360–glutamine 4393 is one TPR 6 repeat. Residues alanine 4371–arginine 4403 form an HAT 3 repeat. Residues phenylalanine 4611–tyrosine 4701 form a Spectrin 4 repeat. LRR repeat units lie at residues asparagine 4654–lysine 4676 and glutamate 4742–glutamate 4763. Residues glutamate 4799–glutamine 4830 form an HAT 4 repeat. The Spectrin 5 repeat unit spans residues histidine 4820–glutamine 4919. The LRR 18 repeat unit spans residues aspartate 4839–alanine 4863. The HAT 5 repeat unit spans residues alanine 4894 to aspartate 4926. LRR repeat units lie at residues glutamine 5266–valine 5289 and serine 5333–histidine 5357. A TPR 7 repeat occupies serine 5645–tyrosine 5678. 3 LRR repeats span residues serine 5761–arginine 5784, proline 5820–glycine 5843, and threonine 5979–histidine 6002. The Spectrin 6 repeat unit spans residues glutamate 5791 to alanine 5895. Residues serine 6088–lysine 6120 form an HAT 6 repeat. Spectrin repeat units lie at residues arginine 6321 to lysine 6405 and alanine 6424 to glutamate 6530. Coiled-coil stretches lie at residues methionine 6356–leucine 6397 and arginine 6454–lysine 6484. Residues tyrosine 6363–leucine 6387 form an LRR 24 repeat. A TPR 8 repeat occupies valine 6522 to isoleucine 6555. LRR repeat units follow at residues serine 6531 to proline 6554 and leucine 6560 to glutamate 6587. A coiled-coil region spans residues leucine 6567–alanine 6597. The segment at glutamate 6631–glutamate 6657 is disordered. A TPR 9 repeat occupies valine 6660–histidine 6695. One copy of the LRR 27 repeat lies at serine 7004–arginine 7026. A TPR 10 repeat occupies glutamate 7161–lysine 7195. LRR repeat units follow at residues leucine 7219–arginine 7242, lysine 7300–proline 7318, glutamate 7319–alanine 7339, and histidine 7340–phenylalanine 7361. A coiled-coil region spans residues lysine 7419 to methionine 7457. One copy of the LRR 32 repeat lies at serine 7524 to arginine 7547. Residues threonine 7644–arginine 7676 form an HAT 7 repeat. One copy of the TPR 11 repeat lies at lysine 7654 to valine 7687. LRR repeat units follow at residues glutamine 7692–glutamine 7714, glutamine 7752–asparagine 7777, and leucine 7816–phenylalanine 7840. One copy of the TPR 12 repeat lies at glutamate 7759 to lysine 7792. A coiled-coil region spans residues threonine 7799–glutamate 7935. The stretch at serine 7878–tyrosine 7911 is one TPR 13 repeat. LRR repeat units follow at residues lysine 8178 to glutamine 8201, glutamate 8238 to asparagine 8264, glutamate 8298 to glutamate 8321, and aspartate 8354 to glycine 8377. Residues glutamine 8431–tryptophan 8464 form a TPR 14 repeat. An LRR 40 repeat occupies glutamate 8534–isoleucine 8557. Disordered regions lie at residues isoleucine 8583–isoleucine 8616, glutamine 8966–proline 9023, glutamate 9131–alanine 9158, glycine 9361–aspartate 9459, leucine 9502–serine 9735, and threonine 9769–leucine 9797. Over residues serine 8601–methionine 8611 the composition is skewed to polar residues. Positions threonine 8982–glutamate 9011 are enriched in low complexity. The segment covering serine 9136–glutamate 9151 has biased composition (basic and acidic residues). Residues lysine 9394–aspartate 9404 show a composition bias toward basic residues. Over residues glutamate 9410–proline 9419 the composition is skewed to acidic residues. Residues glutamate 9420 to glutamate 9439 are compositionally biased toward low complexity. Basic and acidic residues predominate over residues aspartate 9440–isoleucine 9451. 3 stretches are compositionally biased toward polar residues: residues alanine 9544 to leucine 9563, isoleucine 9587 to serine 9597, and glutamate 9605 to lysine 9625. Low complexity predominate over residues threonine 9658–proline 9680. Residues glutamate 9681–threonine 9698 show a composition bias toward basic and acidic residues. Residues serine 9699–proline 9721 form an LRR 41 repeat. Positions methionine 9711–serine 9735 are enriched in polar residues. Over residues lysine 9777 to lysine 9788 the composition is skewed to basic residues. 4 LRR repeats span residues serine 9995–valine 10019, glutamate 10073–leucine 10096, lysine 10252–glutamine 10276, and arginine 10353–aspartate 10376. 2 coiled-coil regions span residues serine 10072–glutamine 10099 and leucine 10172–isoleucine 10257. One copy of the TPR 15 repeat lies at glutamine 10231 to leucine 10264. The HAT 8 repeat unit spans residues isoleucine 10426–lysine 10458. LRR repeat units lie at residues glutamate 10512 to aspartate 10535, glutamate 10570 to leucine 10593, and alanine 10644 to glutamine 10667. Residues valine 10854–valine 10888 form a TPR 16 repeat. An HAT 9 repeat occupies valine 10855–alanine 10887. LRR repeat units lie at residues aspartate 10907–leucine 10929 and alanine 11021–serine 11043. Positions leucine 11016–alanine 11046 form a coiled coil. An HAT 10 repeat occupies aspartate 11070–serine 11104. The TPR 17 repeat unit spans residues phenylalanine 11072–phenylalanine 11105. One copy of the LRR 51 repeat lies at glutamate 11197–alanine 11222. Coiled-coil stretches lie at residues leucine 11220–histidine 11247 and leucine 11281–leucine 11308. LRR repeat units lie at residues serine 11342–threonine 11365, leucine 11398–aspartate 11422, glutamate 11670–serine 11692, proline 11697–arginine 11720, and glutamate 11744–glutamine 11766. Positions lysine 11655–isoleucine 11685 form a coiled coil. Positions leucine 11776 to arginine 11806 form a coiled coil. The stretch at lysine 11804–threonine 11836 is one HAT 11 repeat. LRR repeat units follow at residues aspartate 11959 to histidine 11981 and serine 12198 to lysine 12220. Residues serine 12253–alanine 12272 are disordered. Residues alanine 12256–threonine 12267 are compositionally biased toward low complexity. A KASH domain is found at alanine 12287–threonine 12345. Residues alanine 12296–histidine 12316 traverse the membrane as a helical; Anchor for type IV membrane protein segment. The stretch at glutamine 12301–methionine 12323 is one LRR 59 repeat. Over glycine 12317–threonine 12345 the chain is Perinuclear space.

The protein belongs to the nesprin family. As to quaternary structure, core component of LINC complexes which are composed of inner nuclear membrane SUN domain-containing proteins coupled to outer nuclear membrane KASH domain-containing nesprins. Interacts with klar; this interaction allows the anchoring of the Msp300 nuclear ring structure to the nuclear envelope. Interacts with sls; this interaction mediates the recruitment of Msp300 to the Z-disks.

Its subcellular location is the nucleus membrane. The protein resides in the cytoplasm. The protein localises to the myofibril. It is found in the sarcomere. It localises to the z line. Its subcellular location is the cytoskeleton. The protein resides in the microtubule organizing center. The protein localises to the perinuclear region. Its function is as follows. Component of the LINC (LInker of Nucleoskeleton and Cytoskeleton) complex involved in the connection between the nuclear lamina and the cytoskeleton. Collaborates with Klar to promote even spacing of the myonuclei at the periphery of striated muscle fibers by mediating a tight association between a nuclear ring structure of Msp300 and the plus ends of a unique astral MT network. In addition, is essential for anchoring nuclei, mitochondria and endoplasmic reticulum (ER) structures to the Z-disks. In fat body cells, part of perinuclear non-centrosomal microtubule-organizing centers (ncMTOCs) which function to accommodate the organization of microtubule (MT) networks to control nuclear positioning and dynein motor-based retrograde endosomal trafficking. Functions as the primary organizer of the ncMTOC by recruiting Patronin, shot and msps to the organizing centre. Within the ncMTOC, Msp300 and shot anchors the ncMTOC at the nuclear surface and recruits the MT minus-end regulators Patronin and Nin for assembly, anchoring and/or stabilization of circumferential and radial MTs at the ncMTOCs. Patronin, and perhaps Nin, recruits msps to the ncMTOC for the gamma-tubulin-independent elongation of radial MTs. The protein is Muscle-specific protein 300 kDa of Drosophila melanogaster (Fruit fly).